The sequence spans 305 residues: Regulator of microtubule dynamics protein 1 (305 aa).

At lysine 160 the chain carries N6-succinyllysine. 2 TPR repeats span residues alanine 163–aspartate 199 and proline 217–phenylalanine 253. Residue lysine 245 is modified to N6-succinyllysine.

Belongs to the RMDN family. In terms of assembly, interacts with microtubules.

The protein resides in the cytoplasm. It localises to the cytoskeleton. Its subcellular location is the spindle. The protein localises to the spindle pole. The sequence is that of Regulator of microtubule dynamics protein 1 (Rmdn1) from Mus musculus (Mouse).